A 570-amino-acid polypeptide reads, in one-letter code: Probable metalloreductase AIM14 (570 aa).

7 consecutive transmembrane segments (helical) span residues 21–41, 70–90, 101–118, 142–162, 177–197, 204–224, and 230–250; these read IKYGYYVLIISLVYLIGLALL, AIHLGILFFAVLIPFYYHYSL, LGRLSYALIPLNLFLTLR, IITVIGLLHGIFFIIKWAIDD, FVGFIISILVLFLLICSIGPM, LFYIVHNLVNVAFILLTPIHS, and FPFLLLNCTLLFIHIINRIVF. The 119-residue stretch at 101–219 folds into the Ferric oxidoreductase domain; it reads LGRLSYALIP…NLVNVAFILL (119 aa). In terms of domain architecture, FAD-binding FR-type spans 250–388; the sequence is FAKSLMILNK…GGSGISFALP (139 aa). The span at 481–505 shows a compositional bias: polar residues; that stretch reads SNFNSENADSNDNTPETSHSPTKEN. The segment at 481-507 is disordered; that stretch reads SNFNSENADSNDNTPETSHSPTKENGS.

The protein belongs to the ferric reductase (FRE) family. AIM14 subfamily. As to quaternary structure, interacts with ribosomes.

It is found in the membrane. Functionally, probable cell surface metalloreductase. May be involved in iron or copper homeostasis. This Saccharomyces cerevisiae (strain RM11-1a) (Baker's yeast) protein is Probable metalloreductase AIM14 (AIM14).